The sequence spans 247 residues: Uridylate kinase (247 aa).

17–20 contributes to the ATP binding site; sequence KFSG. Gly-59 contacts UMP. ATP-binding residues include Gly-60 and Arg-64. Residues Asp-79 and 140-147 contribute to the UMP site; that span reads TGNPFFTT. Residues Thr-167, Tyr-173, and Asp-176 each coordinate ATP.

This sequence belongs to the UMP kinase family. Homohexamer.

It is found in the cytoplasm. The enzyme catalyses UMP + ATP = UDP + ADP. It participates in pyrimidine metabolism; CTP biosynthesis via de novo pathway; UDP from UMP (UMPK route): step 1/1. Its activity is regulated as follows. Inhibited by UTP. Catalyzes the reversible phosphorylation of UMP to UDP. This Legionella pneumophila subsp. pneumophila (strain Philadelphia 1 / ATCC 33152 / DSM 7513) protein is Uridylate kinase.